A 333-amino-acid polypeptide reads, in one-letter code: O-acetyl transferase (333 aa).

It belongs to the acyltransferase 3 family.

It is found in the host cell inner membrane. In terms of biological role, antigenically converts S.flexneri serotype X to 3a, Y to 3b, 1a to 1b and 4a to 4b by O-acetylating the O-antigenic polysaccharide chain. This chain is O-acetyl transferase (OAC), found in Shigella flexneri (Shigella flexneri bacteriophage VI).